A 154-amino-acid chain; its full sequence is Probable chemoreceptor glutamine deamidase CheD (154 aa).

Belongs to the CheD family.

It carries out the reaction L-glutaminyl-[protein] + H2O = L-glutamyl-[protein] + NH4(+). Functionally, probably deamidates glutamine residues to glutamate on methyl-accepting chemotaxis receptors (MCPs), playing an important role in chemotaxis. This is Probable chemoreceptor glutamine deamidase CheD from Methanococcus maripaludis (strain C5 / ATCC BAA-1333).